We begin with the raw amino-acid sequence, 228 residues long: Cutinase (228 aa).

Residues 1–16 form the signal peptide; it reads MKFLSIISLAVSLVAA. Cysteines 49 and 129 form a disulfide. The active-site Nucleophile is the Ser-140. Cysteines 191 and 198 form a disulfide. The active site involves Asp-195. Catalysis depends on His-208, which acts as the Proton donor/acceptor.

The protein belongs to the cutinase family. The 2 disulfide bonds play a critical role in holding the catalytic residues in juxta-position; reduction of the disulfide bridges results in the complete inactivation of the enzyme.

It localises to the secreted. The enzyme catalyses cutin + H2O = cutin monomers.. Partially inhibited by berberine; higher inhibitory effects are observed with longer chain polyester substrates. In terms of biological role, catalyzes the hydrolysis of complex carboxylic polyesters found in the cell wall of plants. Degrades cutin, a macromolecule that forms the structure of the plant cuticle. Allows pathogenic fungi to penetrate through the cuticular barrier into the host plant during the initial stage of fungal infection. The sequence is that of Cutinase (CUTA) from Colletotrichum truncatum (Anthracnose fungus).